Consider the following 238-residue polypeptide: MSGFDVTKTFNRFTQRAGELVNKNEKTSYPTRTSDLIHEIDQMKAWISKIITATEEFVDINIASKVADAFQKNKEKITTTDKLGTALEQVASQSEKAAPQLSKMLTEASDVHQRMATARKNFNSEVNTTFIEDLKNFLNTTLSEAQKAKTKLEEVRLDLDSDKTKLKNAKTAEQKAKWEAEVRKDESDFDRVHQESLTIFEKTCKEFDGLSVQLLDLIRAEKNYYEACAKECSMMLGE.

The BAR domain occupies 18–238; the sequence is GELVNKNEKT…AKECSMMLGE (221 aa).

This is Hydatid disease diagnostic antigen P-29 from Echinococcus granulosus (Hydatid tapeworm).